We begin with the raw amino-acid sequence, 204 residues long: Altered inheritance of mitochondria protein 20 (204 aa).

The chain crosses the membrane as a helical span at residues 6 to 26 (VAVGTAVGIPIAVGVIIALIF).

The protein belongs to the SKG1 family.

The protein resides in the vacuole membrane. Functionally, involved in cell cycle progression and surviving DNA damage. The chain is Altered inheritance of mitochondria protein 20 (AIM20) from Saccharomyces cerevisiae (strain JAY291) (Baker's yeast).